The primary structure comprises 265 residues: WUSCHEL-related homeobox 3B (265 aa).

Positions 4–68 form a DNA-binding region, homeobox; WUS-type; it reads TPSTRWCPTP…NHKARERQRL (65 aa). Disordered regions lie at residues 77 to 107 and 242 to 265; these read QQQYAQQQQQATAAAPASSPNSSATLLAPPA and PTKSTGLKDECSSSKSSSCSTSTN. Over residues 254–265 the composition is skewed to low complexity; the sequence is SSKSSSCSTSTN.

Belongs to the WUS homeobox family. In terms of tissue distribution, predominantly expressed in tissues enriched for shoot meristems and young lateral organ primordia. First expressed in lateral domains of shoot meristems. It is then expressed in the margins of young lateral organ primordia. Not expressed in roots, seedling leaves or fully expanded coleoptiles. Also expressed in vegetative shoot apices (five leaf primordia and the SAM) and in the male inflorescence. Expressed at high level in the female inflorescence.

Its subcellular location is the nucleus. Functionally, probable transcription factor required to initiate organ founder cells in a lateral domain of shoot meristems. Involved in leaf formation. The chain is WUSCHEL-related homeobox 3B (WOX3B) from Zea mays (Maize).